Here is a 352-residue protein sequence, read N- to C-terminus: Biotin synthase (352 aa).

Residues 44 to 262 (NRVQVSTLLS…LAVARIMMPK (219 aa)) enclose the Radical SAM core domain. The [4Fe-4S] cluster site is built by C59, C63, and C66. 4 residues coordinate [2Fe-2S] cluster: C103, C134, C194, and R266.

This sequence belongs to the radical SAM superfamily. Biotin synthase family. In terms of assembly, homodimer. It depends on [4Fe-4S] cluster as a cofactor. The cofactor is [2Fe-2S] cluster.

The catalysed reaction is (4R,5S)-dethiobiotin + (sulfur carrier)-SH + 2 reduced [2Fe-2S]-[ferredoxin] + 2 S-adenosyl-L-methionine = (sulfur carrier)-H + biotin + 2 5'-deoxyadenosine + 2 L-methionine + 2 oxidized [2Fe-2S]-[ferredoxin]. Its pathway is cofactor biosynthesis; biotin biosynthesis; biotin from 7,8-diaminononanoate: step 2/2. Catalyzes the conversion of dethiobiotin (DTB) to biotin by the insertion of a sulfur atom into dethiobiotin via a radical-based mechanism. This is Biotin synthase from Pseudomonas aeruginosa (strain LESB58).